Reading from the N-terminus, the 212-residue chain is Redox-sensing transcriptional repressor Rex (212 aa).

A DNA-binding region (H-T-H motif) is located at residues 17 to 56 (LYYRIFKRFNTDGIEKASSKQIADALGIDSATVRRDFSYF). 91 to 96 (GCGNIG) lines the NAD(+) pocket.

It belongs to the transcriptional regulatory Rex family. As to quaternary structure, homodimer.

Its subcellular location is the cytoplasm. In terms of biological role, modulates transcription in response to changes in cellular NADH/NAD(+) redox state. The polypeptide is Redox-sensing transcriptional repressor Rex (Streptococcus agalactiae serotype III (strain NEM316)).